Reading from the N-terminus, the 178-residue chain is ATP synthase subunit delta (178 aa).

Belongs to the ATPase delta chain family. As to quaternary structure, F-type ATPases have 2 components, F(1) - the catalytic core - and F(0) - the membrane proton channel. F(1) has five subunits: alpha(3), beta(3), gamma(1), delta(1), epsilon(1). F(0) has three main subunits: a(1), b(2) and c(10-14). The alpha and beta chains form an alternating ring which encloses part of the gamma chain. F(1) is attached to F(0) by a central stalk formed by the gamma and epsilon chains, while a peripheral stalk is formed by the delta and b chains.

The protein resides in the cell inner membrane. Its function is as follows. F(1)F(0) ATP synthase produces ATP from ADP in the presence of a proton or sodium gradient. F-type ATPases consist of two structural domains, F(1) containing the extramembraneous catalytic core and F(0) containing the membrane proton channel, linked together by a central stalk and a peripheral stalk. During catalysis, ATP synthesis in the catalytic domain of F(1) is coupled via a rotary mechanism of the central stalk subunits to proton translocation. This protein is part of the stalk that links CF(0) to CF(1). It either transmits conformational changes from CF(0) to CF(1) or is implicated in proton conduction. This Aromatoleum aromaticum (strain DSM 19018 / LMG 30748 / EbN1) (Azoarcus sp. (strain EbN1)) protein is ATP synthase subunit delta.